The following is a 231-amino-acid chain: MSVTLALPSKGRLKEKTLAVLEKAGYKVVLPDDDRNYRARVEGEDDLDILFLSASEIARELGYGSVDLGVTGEDLVRETLAHADERVAIEAQLGFGHADVVVAVPEVWRDVTTMADLDDVAADFRQRHGRRLRIATKYWRLTQQFFSQKHGIQVYRIVESLGATEGAPAAGSADMIVDITSTGSTLRANRLKVLEDGIILRSQACLVSARRSHTSRRVEEIAARIRAGLEI.

This sequence belongs to the ATP phosphoribosyltransferase family. Short subfamily. As to quaternary structure, heteromultimer composed of HisG and HisZ subunits.

Its subcellular location is the cytoplasm. The catalysed reaction is 1-(5-phospho-beta-D-ribosyl)-ATP + diphosphate = 5-phospho-alpha-D-ribose 1-diphosphate + ATP. It functions in the pathway amino-acid biosynthesis; L-histidine biosynthesis; L-histidine from 5-phospho-alpha-D-ribose 1-diphosphate: step 1/9. In terms of biological role, catalyzes the condensation of ATP and 5-phosphoribose 1-diphosphate to form N'-(5'-phosphoribosyl)-ATP (PR-ATP). Has a crucial role in the pathway because the rate of histidine biosynthesis seems to be controlled primarily by regulation of HisG enzymatic activity. The sequence is that of ATP phosphoribosyltransferase from Brucella suis (strain ATCC 23445 / NCTC 10510).